A 363-amino-acid chain; its full sequence is MSHISPIPEILADIKVGKMVIITDAEDRENEGDLLMAAQFVTPEAINFMIKHARGLVCLPMDGEMVEKLGLPMMTQKNGAQYGTNFTVSIEAAHGITTGISAADRALTIQTAVSPTAKPEDIVQPGHIFPLRAQKGGVLVRAGHTEAGVDLAQMNGLIPAAVICEIINDDGTMARMPELMKFAEEHKLKIGTITDLIEYRSRTESLLEDMGNAPVQTPWGEFQQHVYVDKLSGETHLALVKGTPSADTETLVRVHEPFSVMDFIQANPRHSWSLPKALERVQQAESGVVILLHRTEDGASLLDRTLPKGANQAYKWDSKSYGIGAQILAGLNVKKLRVLGQPSSFTGLTGFGLEVVGFEEAEK.

The DHBP synthase stretch occupies residues 1-202 (MSHISPIPEI…ITDLIEYRSR (202 aa)). Residues 28–29 (RE), Asp33, 141–145 (RAGHT), and Glu165 each bind D-ribulose 5-phosphate. Mg(2+) is bound at residue Glu29. His144 is a Mg(2+) binding site. Positions 205 to 363 (SLLEDMGNAP…EVVGFEEAEK (159 aa)) are GTP cyclohydrolase II-like.

In the N-terminal section; belongs to the DHBP synthase family. This sequence in the C-terminal section; belongs to the GTP cyclohydrolase II family. The cofactor is Mg(2+). Mn(2+) serves as cofactor.

The catalysed reaction is D-ribulose 5-phosphate = (2S)-2-hydroxy-3-oxobutyl phosphate + formate + H(+). The protein operates within cofactor biosynthesis; riboflavin biosynthesis; 2-hydroxy-3-oxobutyl phosphate from D-ribulose 5-phosphate: step 1/1. Functionally, catalyzes the conversion of D-ribulose 5-phosphate to formate and 3,4-dihydroxy-2-butanone 4-phosphate. The chain is 3,4-dihydroxy-2-butanone 4-phosphate synthase (ribB) from Neisseria meningitidis serogroup A / serotype 4A (strain DSM 15465 / Z2491).